A 560-amino-acid polypeptide reads, in one-letter code: Cytosolic purine 5'-nucleotidase (560 aa).

The active-site Nucleophile is the Asp52. IMP is bound by residues Asp52 and Asp54. Mg(2+) contacts are provided by Asp52 and Asp54. The active-site Proton donor is Asp54. The ATP site is built by Arg144 and Asn154. Residues Arg202, Asp206, Lys215, Thr249, Asn250, Ser251, and Lys292 each coordinate IMP. Asp351 is a Mg(2+) binding site. Phosphoserine is present on Ser418. The ATP site is built by Gln453 and Arg456. A phosphoserine mark is found at Ser502, Ser511, and Ser527. The segment at 541 to 560 (PQEITHCHDEDDDEEEEEEE) is disordered. The tract at residues 548-560 (HDEDDDEEEEEEE) is required for tetramer assembly. Over residues 550 to 560 (EDDDEEEEEEE) the composition is skewed to acidic residues.

The protein belongs to the 5'(3')-deoxyribonucleotidase family. Homotetramer. Requires Mg(2+) as cofactor.

The protein localises to the cytoplasm. It localises to the cytosol. It carries out the reaction a ribonucleoside 5'-phosphate + H2O = a ribonucleoside + phosphate. It catalyses the reaction a 2'-deoxyribonucleoside + a ribonucleoside 5'-phosphate = a ribonucleoside + a 2'-deoxyribonucleoside 5'-phosphate. The catalysed reaction is IMP + H2O = inosine + phosphate. The enzyme catalyses GMP + H2O = guanosine + phosphate. It carries out the reaction dIMP + H2O = 2'-deoxyinosine + phosphate. It catalyses the reaction dGMP + H2O = 2'-deoxyguanosine + phosphate. The catalysed reaction is XMP + H2O = xanthosine + phosphate. The enzyme catalyses inosine + GMP = guanosine + IMP. It carries out the reaction dGMP + inosine = 2'-deoxyguanosine + IMP. It catalyses the reaction dIMP + inosine = 2'-deoxyinosine + IMP. The catalysed reaction is inosine + UMP = uridine + IMP. The enzyme catalyses inosine + CMP = cytidine + IMP. It carries out the reaction inosine + AMP = IMP + adenosine. Its activity is regulated as follows. Allosterically activated by various compounds including ATP, 2,3-BPG/2,3-Bisphosphoglyceric acid and Ap4A/P1,P4-bis(5'-adenosyl) tetraphosphate. Binding of an allosteric activator is a prerequisiste to magnesium and substrate binding. Inhibited by inorganic phosphate. In terms of biological role, broad specificity cytosolic 5'-nucleotidase that catalyzes the dephosphorylation of 6-hydroxypurine nucleoside 5'-monophosphates. In addition, possesses a phosphotransferase activity by which it can transfer a phosphate from a donor nucleoside monophosphate to an acceptor nucleoside, preferably inosine, deoxyinosine and guanosine. Has the highest activities for IMP and GMP followed by dIMP, dGMP and XMP. Could also catalyze the transfer of phosphates from pyrimidine monophosphates but with lower efficiency. Through these activities regulates the purine nucleoside/nucleotide pools within the cell. This chain is Cytosolic purine 5'-nucleotidase, found in Bos taurus (Bovine).